The sequence spans 759 residues: Putative ATP-dependent DNA helicase YjcD (759 aa).

The interval 68 to 121 (ACEPKPSKEGKKEDDQESGVIRLPKGKAIAADPSPAVTEWHRPRSIKPGTPFVP) is disordered. Positions 69–81 (CEPKPSKEGKKED) are enriched in basic and acidic residues. One can recognise a UvrD-like helicase ATP-binding domain in the interval 134–413 (VGLNTDQLKA…IYLTANYRST (280 aa)). ATP contacts are provided by residues 158–163 (GSGKTR) and Arg-411. In terms of domain architecture, UvrD-like helicase C-terminal spans 414-676 (HPIVSSADIV…QLMTIHRSKG (263 aa)).

The protein belongs to the helicase family. UvrD subfamily.

Its subcellular location is the cytoplasm. It catalyses the reaction Couples ATP hydrolysis with the unwinding of duplex DNA by translocating in the 3'-5' direction.. The catalysed reaction is ATP + H2O = ADP + phosphate + H(+). Its function is as follows. May be involved in the generation of recombinogenic substrates for the subsequent action of RecA. The protein is Putative ATP-dependent DNA helicase YjcD (yjcD) of Bacillus subtilis (strain 168).